The sequence spans 358 residues: 3-isopropylmalate dehydrogenase (358 aa).

Gly77 to Glu90 contacts NAD(+). Substrate-binding residues include Arg97, Arg107, Arg135, and Asp220. 3 residues coordinate Mg(2+): Asp220, Asp244, and Asp248. Gly277 to Asn289 contributes to the NAD(+) binding site.

This sequence belongs to the isocitrate and isopropylmalate dehydrogenases family. LeuB type 1 subfamily. Homodimer. Requires Mg(2+) as cofactor. Mn(2+) serves as cofactor.

The protein resides in the cytoplasm. It catalyses the reaction (2R,3S)-3-isopropylmalate + NAD(+) = 4-methyl-2-oxopentanoate + CO2 + NADH. It participates in amino-acid biosynthesis; L-leucine biosynthesis; L-leucine from 3-methyl-2-oxobutanoate: step 3/4. Its function is as follows. Catalyzes the oxidation of 3-carboxy-2-hydroxy-4-methylpentanoate (3-isopropylmalate) to 3-carboxy-4-methyl-2-oxopentanoate. The product decarboxylates to 4-methyl-2 oxopentanoate. The polypeptide is 3-isopropylmalate dehydrogenase (Wolinella succinogenes (strain ATCC 29543 / DSM 1740 / CCUG 13145 / JCM 31913 / LMG 7466 / NCTC 11488 / FDC 602W) (Vibrio succinogenes)).